Consider the following 129-residue polypeptide: Phosphoribosyl-AMP cyclohydrolase (129 aa).

Asp78 contributes to the Mg(2+) binding site. Cys79 lines the Zn(2+) pocket. Positions 80 and 82 each coordinate Mg(2+). Positions 96 and 103 each coordinate Zn(2+).

It belongs to the PRA-CH family. In terms of assembly, homodimer. Mg(2+) serves as cofactor. Requires Zn(2+) as cofactor.

The protein resides in the cytoplasm. It carries out the reaction 1-(5-phospho-beta-D-ribosyl)-5'-AMP + H2O = 1-(5-phospho-beta-D-ribosyl)-5-[(5-phospho-beta-D-ribosylamino)methylideneamino]imidazole-4-carboxamide. It functions in the pathway amino-acid biosynthesis; L-histidine biosynthesis; L-histidine from 5-phospho-alpha-D-ribose 1-diphosphate: step 3/9. Its function is as follows. Catalyzes the hydrolysis of the adenine ring of phosphoribosyl-AMP. The polypeptide is Phosphoribosyl-AMP cyclohydrolase (Nitrosomonas eutropha (strain DSM 101675 / C91 / Nm57)).